Consider the following 79-residue polypeptide: Acyl carrier protein 2 (79 aa).

The region spanning 2–77 is the Carrier domain; that stretch reads DDIETRVRKL…QAIDYLEEAV (76 aa). Ser37 carries the post-translational modification O-(pantetheine 4'-phosphoryl)serine.

The protein belongs to the acyl carrier protein (ACP) family. 4'-phosphopantetheine is transferred from CoA to a specific serine of apo-ACP by AcpS. This modification is essential for activity because fatty acids are bound in thioester linkage to the sulfhydryl of the prosthetic group.

It localises to the cytoplasm. The protein operates within lipid metabolism; fatty acid biosynthesis. In terms of biological role, carrier of the growing fatty acid chain in fatty acid biosynthesis. The chain is Acyl carrier protein 2 from Pseudomonas aeruginosa (strain ATCC 15692 / DSM 22644 / CIP 104116 / JCM 14847 / LMG 12228 / 1C / PRS 101 / PAO1).